A 474-amino-acid polypeptide reads, in one-letter code: Dihydrolipoyl dehydrogenase (474 aa).

FAD is bound by residues 36 to 44 (EAKDMGGTC), Lys53, and Gly119. A disulfide bond links Cys44 and Cys49. Residues 184–188 (GSGYI), Glu207, and 275–278 (ATGR) each bind NAD(+). Residues Asp323 and Ala331 each coordinate FAD. The active-site Proton acceptor is His459.

This sequence belongs to the class-I pyridine nucleotide-disulfide oxidoreductase family. Homodimer. FAD serves as cofactor.

Its subcellular location is the cell inner membrane. The enzyme catalyses N(6)-[(R)-dihydrolipoyl]-L-lysyl-[protein] + NAD(+) = N(6)-[(R)-lipoyl]-L-lysyl-[protein] + NADH + H(+). Its function is as follows. Lipoamide dehydrogenase is a component of the alpha-ketoacid dehydrogenase complexes. In Synechocystis sp. (strain ATCC 27184 / PCC 6803 / Kazusa), this protein is Dihydrolipoyl dehydrogenase (lpdA).